The sequence spans 124 residues: Small ribosomal subunit protein uS12 (124 aa).

The residue at position 89 (Asp-89) is a 3-methylthioaspartic acid.

Belongs to the universal ribosomal protein uS12 family. Part of the 30S ribosomal subunit. Contacts proteins S8 and S17. May interact with IF1 in the 30S initiation complex.

Functionally, with S4 and S5 plays an important role in translational accuracy. Its function is as follows. Interacts with and stabilizes bases of the 16S rRNA that are involved in tRNA selection in the A site and with the mRNA backbone. Located at the interface of the 30S and 50S subunits, it traverses the body of the 30S subunit contacting proteins on the other side and probably holding the rRNA structure together. The combined cluster of proteins S8, S12 and S17 appears to hold together the shoulder and platform of the 30S subunit. The protein is Small ribosomal subunit protein uS12 of Buchnera aphidicola subsp. Schizaphis graminum (strain Sg).